Consider the following 300-residue polypeptide: Homoserine kinase (300 aa).

82–92 (RPGSGLGSSAA) contributes to the ATP binding site.

This sequence belongs to the GHMP kinase family. Homoserine kinase subfamily.

The protein localises to the cytoplasm. It catalyses the reaction L-homoserine + ATP = O-phospho-L-homoserine + ADP + H(+). It functions in the pathway amino-acid biosynthesis; L-threonine biosynthesis; L-threonine from L-aspartate: step 4/5. In terms of biological role, catalyzes the ATP-dependent phosphorylation of L-homoserine to L-homoserine phosphate. In Methanocella arvoryzae (strain DSM 22066 / NBRC 105507 / MRE50), this protein is Homoserine kinase.